The primary structure comprises 144 residues: PE family protein PE9 (144 aa).

In terms of domain architecture, PE spans 1 to 87 (MSYMIATPAA…RTLTGGCGVF (87 aa)). The disordered stretch occupies residues 98-124 (AAEHRAAGAGRRQRRRRSGDGQWRLRQ).

Belongs to the mycobacterial PE family. As to quaternary structure, forms a complex with PE10. The complex interacts with human TLR4.

The protein resides in the secreted. Its subcellular location is the cell wall. It is found in the cell surface. Functionally, together with PE10, induces macrophage apoptosis through human Toll-like receptor 4 (TLR4) signaling pathway. Interaction with TLR4 leads to increased levels of phospho-IRF-3, increase in the transcript levels of IFN-beta and pro-apoptotic genes, up-regulation of IL-10, down-regulation of IL-1b and enhanced levels of macrophage apoptosis. This Mycobacterium tuberculosis (strain ATCC 25618 / H37Rv) protein is PE family protein PE9.